The primary structure comprises 326 residues: Biotin synthase (326 aa).

The Radical SAM core domain maps to 51-278 (NRVQVSRLIS…KSFVRLSAGR (228 aa)). Cysteine 66, cysteine 70, and cysteine 73 together coordinate [4Fe-4S] cluster. Residues cysteine 110, cysteine 141, cysteine 201, and arginine 273 each contribute to the [2Fe-2S] cluster site.

The protein belongs to the radical SAM superfamily. Biotin synthase family. Homodimer. [4Fe-4S] cluster serves as cofactor. [2Fe-2S] cluster is required as a cofactor.

The catalysed reaction is (4R,5S)-dethiobiotin + (sulfur carrier)-SH + 2 reduced [2Fe-2S]-[ferredoxin] + 2 S-adenosyl-L-methionine = (sulfur carrier)-H + biotin + 2 5'-deoxyadenosine + 2 L-methionine + 2 oxidized [2Fe-2S]-[ferredoxin]. Its pathway is cofactor biosynthesis; biotin biosynthesis; biotin from 7,8-diaminononanoate: step 2/2. Catalyzes the conversion of dethiobiotin (DTB) to biotin by the insertion of a sulfur atom into dethiobiotin via a radical-based mechanism. The sequence is that of Biotin synthase from Paramagnetospirillum magneticum (strain ATCC 700264 / AMB-1) (Magnetospirillum magneticum).